The chain runs to 407 residues: Digeranylgeranylglycerophospholipid reductase (407 aa).

Residues Ala-15, Glu-34, Cys-45, Ala-46, Gly-48, Arg-99, Ala-123, Asp-281, Gly-293, and Ile-294 each coordinate FAD.

Belongs to the geranylgeranyl reductase family. DGGGPL reductase subfamily. The cofactor is FAD.

It carries out the reaction a 2,3-bis-O-phytanyl-sn-glycerol 1-phospholipid + 8 oxidized 2[4Fe-4S]-[ferredoxin] = a 2,3-bis-O-(geranylgeranyl)-sn-glycerol 1-phospholipid + 8 reduced 2[4Fe-4S]-[ferredoxin] + 16 H(+). It catalyses the reaction 2,3-bis-O-(phytanyl)-sn-glycerol 1-phosphate + 8 oxidized 2[4Fe-4S]-[ferredoxin] = 2,3-bis-O-(geranylgeranyl)-sn-glycerol 1-phosphate + 8 reduced 2[4Fe-4S]-[ferredoxin] + 16 H(+). The enzyme catalyses a 2,3-bis-O-phytanyl-sn-glycerol 1-phospholipid + 8 A = a 2,3-bis-O-(geranylgeranyl)-sn-glycerol 1-phospholipid + 8 AH2. The catalysed reaction is CDP-2,3-bis-O-(geranylgeranyl)-sn-glycerol + 8 AH2 = CDP-2,3-bis-O-(phytanyl)-sn-glycerol + 8 A. It carries out the reaction archaetidylserine + 8 AH2 = 2,3-bis-O-phytanyl-sn-glycero-3-phospho-L-serine + 8 A. It participates in membrane lipid metabolism; glycerophospholipid metabolism. Is involved in the reduction of 2,3-digeranylgeranylglycerophospholipids (unsaturated archaeols) into 2,3-diphytanylglycerophospholipids (saturated archaeols) in the biosynthesis of archaeal membrane lipids. Catalyzes the formation of archaetidic acid (2,3-di-O-phytanyl-sn-glyceryl phosphate) from 2,3-di-O-geranylgeranylglyceryl phosphate (DGGGP) via the hydrogenation of each double bond of the isoprenoid chains. Is also probably able to reduce double bonds of geranyl groups in CDP-2,3-bis-O-(geranylgeranyl)-sn-glycerol and archaetidylserine, thus acting at various stages in the biosynthesis of archaeal membrane lipids. The protein is Digeranylgeranylglycerophospholipid reductase of Methanosarcina mazei (strain ATCC BAA-159 / DSM 3647 / Goe1 / Go1 / JCM 11833 / OCM 88) (Methanosarcina frisia).